Consider the following 516-residue polypeptide: Nucleolar complex protein 4 homolog (516 aa).

Helical transmembrane passes span 296–316, 347–367, and 375–395; these read SACDVGGAISLLALNGLFILI, FFHLADLFLSSSHLPAYLVAA, and LALTAPPEALLMVLPLICNLL.

This sequence belongs to the CBF/MAK21 family.

The protein resides in the nucleus membrane. The protein localises to the nucleus. Its subcellular location is the nucleolus. This chain is Nucleolar complex protein 4 homolog (Noc4l), found in Mus musculus (Mouse).